The chain runs to 166 residues: NAD(P)H-quinone oxidoreductase subunit I, chloroplastic (166 aa).

4Fe-4S ferredoxin-type domains lie at 55–84 (GRIHFEFDKCIACEVCVRVCPIDLPVVDWK) and 95–124 (LNYSIDFGICIFCGNCVEYCPTNCLSMTEE). Residues C64, C67, C70, C74, C104, C107, C110, and C114 each contribute to the [4Fe-4S] cluster site.

It belongs to the complex I 23 kDa subunit family. As to quaternary structure, NDH is composed of at least 16 different subunits, 5 of which are encoded in the nucleus. Requires [4Fe-4S] cluster as cofactor.

It is found in the plastid. The protein localises to the chloroplast thylakoid membrane. The catalysed reaction is a plastoquinone + NADH + (n+1) H(+)(in) = a plastoquinol + NAD(+) + n H(+)(out). It catalyses the reaction a plastoquinone + NADPH + (n+1) H(+)(in) = a plastoquinol + NADP(+) + n H(+)(out). NDH shuttles electrons from NAD(P)H:plastoquinone, via FMN and iron-sulfur (Fe-S) centers, to quinones in the photosynthetic chain and possibly in a chloroplast respiratory chain. The immediate electron acceptor for the enzyme in this species is believed to be plastoquinone. Couples the redox reaction to proton translocation, and thus conserves the redox energy in a proton gradient. The sequence is that of NAD(P)H-quinone oxidoreductase subunit I, chloroplastic from Oteiza scandens (Climbing oteiza).